The sequence spans 150 residues: Single-stranded DNA-binding protein 1 (150 aa).

Positions 1 to 104 constitute an SSB domain; sequence MINNVVLVGR…VVADTFQMLE (104 aa). Over residues 103-120 the composition is skewed to polar residues; sequence LESNKTQGQQTSKPQAQN. Residues 103–150 are disordered; that stretch reads LESNKTQGQQTSKPQAQNKKPQAPDPFKAPAADPFAGGTEISDDDLPF. The segment covering 121–138 has biased composition (low complexity); sequence KKPQAPDPFKAPAADPFA. Positions 145–150 match the Important for interaction with partner proteins motif; sequence DDDLPF.

Homotetramer.

Functionally, plays an important role in DNA replication, recombination and repair. Binds to ssDNA and to an array of partner proteins to recruit them to their sites of action during DNA metabolism. This Lactococcus lactis subsp. lactis (strain IL1403) (Streptococcus lactis) protein is Single-stranded DNA-binding protein 1 (ssb1).